The sequence spans 375 residues: cAMP-dependent protein kinase regulatory subunit (375 aa).

Residues 28 to 142 are dimerization and phosphorylation; that stretch reads RFCADYFNER…SLYKSVSHNF (115 aa). The segment covering 41–50 has biased composition (basic and acidic residues); that stretch reads REEADDDGPR. Positions 41–102 are disordered; it reads REEADDDGPR…EPAAPFTRRT (62 aa). The span at 64 to 82 shows a compositional bias: polar residues; sequence GSSSRSTDGSLFRSSFADT. The span at 83–97 shows a compositional bias: low complexity; sequence SSEGPGSASSEPAAP. Residue S103 is modified to Phosphoserine. Residues 143–258, E208, R217, 261–375, E328, and R337 each bind 3',5'-cyclic AMP; these read LFGN…FLKE and ILSD…DPTK.

The protein belongs to the cAMP-dependent kinase regulatory chain family. Tetramer, composed of 2 regulatory (R) and 2 catalytic (C) subunits. In the presence of cAMP it dissociates into 2 active monomeric C subunits and an R dimer.

The chain is cAMP-dependent protein kinase regulatory subunit (PKAR) from Yarrowia lipolytica (strain CLIB 122 / E 150) (Yeast).